Reading from the N-terminus, the 217-residue chain is Adenylate kinase (217 aa).

10 to 15 is a binding site for ATP; it reads GAGKGT. Residues 30-59 form an NMP region; that stretch reads STGDMFRAAMKNETELGLKAKSYMDAGELV. AMP-binding positions include Thr-31, Arg-36, 57–59, 85–88, and Gln-92; these read ELV and GFPR. The interval 126 to 163 is LID; sequence GRRVSPTSGRTYHVIFNPPKVEGICDVDGSELIQRDDD. ATP-binding positions include Arg-127 and 136–137; that span reads TY. AMP-binding residues include Arg-160 and Arg-171. An ATP-binding site is contributed by Gln-199.

This sequence belongs to the adenylate kinase family. As to quaternary structure, monomer.

It localises to the cytoplasm. It carries out the reaction AMP + ATP = 2 ADP. It functions in the pathway purine metabolism; AMP biosynthesis via salvage pathway; AMP from ADP: step 1/1. Catalyzes the reversible transfer of the terminal phosphate group between ATP and AMP. Plays an important role in cellular energy homeostasis and in adenine nucleotide metabolism. The protein is Adenylate kinase of Halalkalibacterium halodurans (strain ATCC BAA-125 / DSM 18197 / FERM 7344 / JCM 9153 / C-125) (Bacillus halodurans).